The primary structure comprises 353 residues: Photosystem II D2 protein (353 aa).

Thr-2 is modified (N-acetylthreonine). Residue Thr-2 is modified to Phosphothreonine. A helical membrane pass occupies residues 41–61; it reads CAYFALGGWFTGTTFVTSWYT. Residue His-118 participates in chlorophyll a binding. Residues 125–141 form a helical membrane-spanning segment; sequence GFMLRQFELARSVQLRP. Pheophytin a-binding residues include Gln-130 and Asn-143. Residues 153–166 traverse the membrane as a helical segment; the sequence is VFVSVFLIYPLGQS. His-198 serves as a coordination point for chlorophyll a. A helical membrane pass occupies residues 208–228; it reads AALLCAIHGATVENTLFEDGD. The a plastoquinone site is built by His-215 and Phe-262. Position 215 (His-215) interacts with Fe cation. His-269 contributes to the Fe cation binding site. A helical transmembrane segment spans residues 279–295; the sequence is GLWMSALGVVGLALNLR.

It belongs to the reaction center PufL/M/PsbA/D family. PSII is composed of 1 copy each of membrane proteins PsbA, PsbB, PsbC, PsbD, PsbE, PsbF, PsbH, PsbI, PsbJ, PsbK, PsbL, PsbM, PsbT, PsbX, PsbY, PsbZ, Psb30/Ycf12, at least 3 peripheral proteins of the oxygen-evolving complex and a large number of cofactors. It forms dimeric complexes. The cofactor is The D1/D2 heterodimer binds P680, chlorophylls that are the primary electron donor of PSII, and subsequent electron acceptors. It shares a non-heme iron and each subunit binds pheophytin, quinone, additional chlorophylls, carotenoids and lipids. There is also a Cl(-1) ion associated with D1 and D2, which is required for oxygen evolution. The PSII complex binds additional chlorophylls, carotenoids and specific lipids..

Its subcellular location is the plastid. It is found in the chloroplast thylakoid membrane. It catalyses the reaction 2 a plastoquinone + 4 hnu + 2 H2O = 2 a plastoquinol + O2. Functionally, photosystem II (PSII) is a light-driven water:plastoquinone oxidoreductase that uses light energy to abstract electrons from H(2)O, generating O(2) and a proton gradient subsequently used for ATP formation. It consists of a core antenna complex that captures photons, and an electron transfer chain that converts photonic excitation into a charge separation. The D1/D2 (PsbA/PsbD) reaction center heterodimer binds P680, the primary electron donor of PSII as well as several subsequent electron acceptors. D2 is needed for assembly of a stable PSII complex. In Coffea arabica (Arabian coffee), this protein is Photosystem II D2 protein.